The following is a 155-amino-acid chain: SsrA-binding protein (155 aa).

It belongs to the SmpB family.

It localises to the cytoplasm. Functionally, required for rescue of stalled ribosomes mediated by trans-translation. Binds to transfer-messenger RNA (tmRNA), required for stable association of tmRNA with ribosomes. tmRNA and SmpB together mimic tRNA shape, replacing the anticodon stem-loop with SmpB. tmRNA is encoded by the ssrA gene; the 2 termini fold to resemble tRNA(Ala) and it encodes a 'tag peptide', a short internal open reading frame. During trans-translation Ala-aminoacylated tmRNA acts like a tRNA, entering the A-site of stalled ribosomes, displacing the stalled mRNA. The ribosome then switches to translate the ORF on the tmRNA; the nascent peptide is terminated with the 'tag peptide' encoded by the tmRNA and targeted for degradation. The ribosome is freed to recommence translation, which seems to be the essential function of trans-translation. The chain is SsrA-binding protein from Streptococcus sanguinis (strain SK36).